The chain runs to 473 residues: ATP synthase subunit beta (473 aa).

153–160 (GGAGVGKT) is an ATP binding site.

This sequence belongs to the ATPase alpha/beta chains family. As to quaternary structure, F-type ATPases have 2 components, CF(1) - the catalytic core - and CF(0) - the membrane proton channel. CF(1) has five subunits: alpha(3), beta(3), gamma(1), delta(1), epsilon(1). CF(0) has three main subunits: a(1), b(2) and c(9-12). The alpha and beta chains form an alternating ring which encloses part of the gamma chain. CF(1) is attached to CF(0) by a central stalk formed by the gamma and epsilon chains, while a peripheral stalk is formed by the delta and b chains.

It is found in the cell inner membrane. The enzyme catalyses ATP + H2O + 4 H(+)(in) = ADP + phosphate + 5 H(+)(out). In terms of biological role, produces ATP from ADP in the presence of a proton gradient across the membrane. The catalytic sites are hosted primarily by the beta subunits. In Rickettsia massiliae (strain Mtu5), this protein is ATP synthase subunit beta.